Consider the following 200-residue polypeptide: FMN-dependent NADH:quinone oxidoreductase (200 aa).

FMN-binding positions include S10, M96 to F99, and S140 to G143.

It belongs to the azoreductase type 1 family. Homodimer. FMN is required as a cofactor.

It carries out the reaction 2 a quinone + NADH + H(+) = 2 a 1,4-benzosemiquinone + NAD(+). The enzyme catalyses N,N-dimethyl-1,4-phenylenediamine + anthranilate + 2 NAD(+) = 2-(4-dimethylaminophenyl)diazenylbenzoate + 2 NADH + 2 H(+). Its function is as follows. Quinone reductase that provides resistance to thiol-specific stress caused by electrophilic quinones. Functionally, also exhibits azoreductase activity. Catalyzes the reductive cleavage of the azo bond in aromatic azo compounds to the corresponding amines. The protein is FMN-dependent NADH:quinone oxidoreductase of Photorhabdus laumondii subsp. laumondii (strain DSM 15139 / CIP 105565 / TT01) (Photorhabdus luminescens subsp. laumondii).